Reading from the N-terminus, the 118-residue chain is Large ribosomal subunit protein mL53 (118 aa).

Residues 99–118 form a disordered region; it reads AAAASAPGADKVAPGTSTRR.

Belongs to the mitochondrion-specific ribosomal protein mL53 family. As to quaternary structure, component of the mitochondrial ribosome large subunit (39S) which comprises a 16S rRNA and about 50 distinct proteins.

Its subcellular location is the mitochondrion. This Mus musculus (Mouse) protein is Large ribosomal subunit protein mL53 (Mrpl53).